We begin with the raw amino-acid sequence, 379 residues long: Cytochrome b (379 aa).

4 helical membrane-spanning segments follow: residues 33–53 (FGSL…FLAM), 77–98 (WLIR…FIHV), 113–133 (WNIG…GYVL), and 178–198 (FFAF…VHLL). Residues histidine 83 and histidine 97 each coordinate heme b. Histidine 182 and histidine 196 together coordinate heme b. Residue histidine 201 participates in a ubiquinone binding. The next 4 membrane-spanning stretches (helical) occupy residues 226 to 246 (TKDL…ALFF), 288 to 308 (LGGV…PLLN), 320 to 340 (VTQV…WIGG), and 347 to 367 (FTMI…ILIP).

Belongs to the cytochrome b family. In terms of assembly, the cytochrome bc1 complex contains 11 subunits: 3 respiratory subunits (MT-CYB, CYC1 and UQCRFS1), 2 core proteins (UQCRC1 and UQCRC2) and 6 low-molecular weight proteins (UQCRH/QCR6, UQCRB/QCR7, UQCRQ/QCR8, UQCR10/QCR9, UQCR11/QCR10 and a cleavage product of UQCRFS1). This cytochrome bc1 complex then forms a dimer. Heme b serves as cofactor.

It is found in the mitochondrion inner membrane. Functionally, component of the ubiquinol-cytochrome c reductase complex (complex III or cytochrome b-c1 complex) that is part of the mitochondrial respiratory chain. The b-c1 complex mediates electron transfer from ubiquinol to cytochrome c. Contributes to the generation of a proton gradient across the mitochondrial membrane that is then used for ATP synthesis. This chain is Cytochrome b (MT-CYB), found in Akodon lutescens puer (Altiplano grass mouse).